A 208-amino-acid chain; its full sequence is 3-demethoxyubiquinol 3-hydroxylase (208 aa).

Positions 57, 87, 90, 139, 171, and 174 each coordinate Fe cation.

It belongs to the COQ7 family. Fe cation is required as a cofactor.

It is found in the cell membrane. The enzyme catalyses a 5-methoxy-2-methyl-3-(all-trans-polyprenyl)benzene-1,4-diol + AH2 + O2 = a 3-demethylubiquinol + A + H2O. Its pathway is cofactor biosynthesis; ubiquinone biosynthesis. Functionally, catalyzes the hydroxylation of 2-nonaprenyl-3-methyl-6-methoxy-1,4-benzoquinol during ubiquinone biosynthesis. This is 3-demethoxyubiquinol 3-hydroxylase from Burkholderia cenocepacia (strain HI2424).